Reading from the N-terminus, the 107-residue chain is MAGEDVGAPPDHLWVHQEGIYRDEYQRTWVAVVEEETSFLRARVQQIQVPLGDAARPSHLLTSQLPLMWQLYPEERYMDNNSRLWQIQHHLMVRGVQELLLKLLPDD.

It belongs to the TCL1 family. In terms of assembly, interacts with AKT1 and AKT2 (via PH domain). Does not interact with AKT3. As to expression, not found at a significant level in any tissue.

Its function is as follows. Enhances the phosphorylation and activation of AKT1 and AKT2. This Homo sapiens (Human) protein is Protein p13 MTCP-1 (MTCP1).